The primary structure comprises 314 residues: Homoserine O-acetyltransferase (314 aa).

Cys-142 (acyl-thioester intermediate) is an active-site residue. Substrate contacts are provided by Lys-163 and Ser-192. The active-site Proton acceptor is His-235. The active site involves Glu-237. Arg-249 lines the substrate pocket.

The protein belongs to the MetA family.

The protein resides in the cytoplasm. It catalyses the reaction L-homoserine + acetyl-CoA = O-acetyl-L-homoserine + CoA. Its pathway is amino-acid biosynthesis; L-methionine biosynthesis via de novo pathway; O-acetyl-L-homoserine from L-homoserine: step 1/1. In terms of biological role, transfers an acetyl group from acetyl-CoA to L-homoserine, forming acetyl-L-homoserine. The polypeptide is Homoserine O-acetyltransferase (Azobacteroides pseudotrichonymphae genomovar. CFP2).